Consider the following 277-residue polypeptide: MNIIDGKQIAQNLRANIKLKVDALDRKPGLAVILVGDDEASEVYVRNKDNACKEVGFYSKKINKPINTTQAELLSEIECLNNSDKIDGILVQLPLPKHLDANLVIEAISPKKDIDGFHSENIGKLMQNKPFLRPCTSKGVMMIFEMIGVNLVGKNCVVVGASNIVGRPMACELLNAQATVTICNSKTKNLSNKLKQADIVVVAVGIAQMIQKDWIKPGSIVIDAGINRLDNNQLVGDVDFESVMQVASWITPVPGGVGPMTIAALLENTLIAYEGKI.

NADP(+) contacts are provided by residues Gly-160–Ser-162, Ser-185, and Ile-226.

It belongs to the tetrahydrofolate dehydrogenase/cyclohydrolase family. In terms of assembly, homodimer.

The catalysed reaction is (6R)-5,10-methylene-5,6,7,8-tetrahydrofolate + NADP(+) = (6R)-5,10-methenyltetrahydrofolate + NADPH. It catalyses the reaction (6R)-5,10-methenyltetrahydrofolate + H2O = (6R)-10-formyltetrahydrofolate + H(+). It functions in the pathway one-carbon metabolism; tetrahydrofolate interconversion. Functionally, catalyzes the oxidation of 5,10-methylenetetrahydrofolate to 5,10-methenyltetrahydrofolate and then the hydrolysis of 5,10-methenyltetrahydrofolate to 10-formyltetrahydrofolate. The polypeptide is Bifunctional protein FolD (Ruthia magnifica subsp. Calyptogena magnifica).